Consider the following 767-residue polypeptide: AMP deaminase 3 (767 aa).

2 positions are modified to phosphoserine: S85 and S107. Disordered regions lie at residues 89–111 (QMPP…PTTP) and 181–205 (LGHP…PLPQ). The Zn(2+) site is built by H317 and H319. Substrate contacts are provided by residues H319 and 388–393 (KFNSKY). A Zn(2+)-binding site is contributed by H586. A substrate-binding site is contributed by E589. Residue H608 is the Proton acceptor of the active site. Residue D663 participates in Zn(2+) binding. 664–667 (DPMQ) is a binding site for substrate.

This sequence belongs to the metallo-dependent hydrolases superfamily. Adenosine and AMP deaminases family. Homotetramer. Zn(2+) serves as cofactor.

The enzyme catalyses AMP + H2O + H(+) = IMP + NH4(+). It functions in the pathway purine metabolism; IMP biosynthesis via salvage pathway; IMP from AMP: step 1/1. In terms of biological role, AMP deaminase plays a critical role in energy metabolism. This Homo sapiens (Human) protein is AMP deaminase 3.